The primary structure comprises 198 residues: Ribosome maturation factor RimM (198 aa).

The tract at residues 1–21 (MPPPTASTPDDSADPGPDFAD) is disordered. The PRC barrel domain maps to 122 to 195 (DDELFADDLV…RIVVRPIDGL (74 aa)).

The protein belongs to the RimM family. In terms of assembly, binds ribosomal protein uS19.

The protein resides in the cytoplasm. Functionally, an accessory protein needed during the final step in the assembly of 30S ribosomal subunit, possibly for assembly of the head region. Essential for efficient processing of 16S rRNA. May be needed both before and after RbfA during the maturation of 16S rRNA. It has affinity for free ribosomal 30S subunits but not for 70S ribosomes. This chain is Ribosome maturation factor RimM, found in Salinibacter ruber (strain DSM 13855 / M31).